Reading from the N-terminus, the 373-residue chain is Peptide chain release factor subunit 1 (373 aa).

It belongs to the eukaryotic release factor 1 family. Heterodimer of two subunits, one of which binds GTP.

Its subcellular location is the cytoplasm. Functionally, directs the termination of nascent peptide synthesis (translation) in response to the termination codons UAA, UAG and UGA. The chain is Peptide chain release factor subunit 1 (prf1) from Aeropyrum pernix (strain ATCC 700893 / DSM 11879 / JCM 9820 / NBRC 100138 / K1).